A 206-amino-acid chain; its full sequence is Ribosomal RNA large subunit methyltransferase E (206 aa).

5 residues coordinate S-adenosyl-L-methionine: Gly60, Trp62, Asp80, Asp96, and Asp121. The active-site Proton acceptor is Lys161.

It belongs to the class I-like SAM-binding methyltransferase superfamily. RNA methyltransferase RlmE family.

It is found in the cytoplasm. It carries out the reaction uridine(2552) in 23S rRNA + S-adenosyl-L-methionine = 2'-O-methyluridine(2552) in 23S rRNA + S-adenosyl-L-homocysteine + H(+). In terms of biological role, specifically methylates the uridine in position 2552 of 23S rRNA at the 2'-O position of the ribose in the fully assembled 50S ribosomal subunit. The protein is Ribosomal RNA large subunit methyltransferase E of Nitrosospira multiformis (strain ATCC 25196 / NCIMB 11849 / C 71).